A 763-amino-acid chain; its full sequence is ATP-dependent RNA helicase SUV3 homolog, mitochondrial (763 aa).

A mitochondrion-targeting transit peptide spans 1 to 43; the sequence is MQNCRRCISLTGLLRMTLYLRPSFSIDLSLRRLHRAAFLFSRK. The Helicase ATP-binding domain occupies 181–321; the sequence is NARAITRKIV…ALDLLQKICE (141 aa). 194 to 201 is a binding site for ATP; that stretch reads GPTNSGKT. Residues 330–508 enclose the Helicase C-terminal domain; the sequence is RLYDRLTELT…PTADQIELYA (179 aa). The segment at 724–763 is disordered; it reads AQQLGKSNSQSNENSEPVVNSDDEDNYSGIGRKTRKKRRK. A compositionally biased stretch (polar residues) spans 727–741; the sequence is LGKSNSQSNENSEPV.

The protein belongs to the helicase family. The cofactor is Mg(2+). Mn(2+) is required as a cofactor.

It localises to the mitochondrion. It catalyses the reaction ATP + H2O = ADP + phosphate + H(+). Its function is as follows. Major helicase player in mitochondrial RNA metabolism and maintenance. Likely component of the mitochondrial degradosome (mtEXO) complex, that degrades 3' overhang double-stranded RNA with a 3'-to-5' directionality in an ATP-dependent manner. ATPase and ATP-dependent multisubstrate helicase, able to unwind double-stranded (ds) DNA and RNA, and RNA/DNA heteroduplexes in the 5'-to-3' direction. Regulates mRNA stability and is required for the correct processing and maturation of mitochondrial transcripts. The protein is ATP-dependent RNA helicase SUV3 homolog, mitochondrial of Drosophila melanogaster (Fruit fly).